Reading from the N-terminus, the 679-residue chain is UvrABC system protein B (679 aa).

In terms of domain architecture, Helicase ATP-binding spans 31–414 (ENLTDGLAHQ…ELEKSGTEII (384 aa)). 44–51 (GVTGSGKT) serves as a coordination point for ATP. Residues 97-120 (YYDYYQPEAYVPSSDTFIEKDASI) carry the Beta-hairpin motif. In terms of domain architecture, Helicase C-terminal spans 436-589 (QVDDLLSEAR…QIKYNEEHGI (154 aa)). The region spanning 639-674 (QQQIKKLEQQMYKFAQDLEFEKAAAIRDQLHQLREQ) is the UVR domain.

The protein belongs to the UvrB family. In terms of assembly, forms a heterotetramer with UvrA during the search for lesions. Interacts with UvrC in an incision complex.

It is found in the cytoplasm. In terms of biological role, the UvrABC repair system catalyzes the recognition and processing of DNA lesions. A damage recognition complex composed of 2 UvrA and 2 UvrB subunits scans DNA for abnormalities. Upon binding of the UvrA(2)B(2) complex to a putative damaged site, the DNA wraps around one UvrB monomer. DNA wrap is dependent on ATP binding by UvrB and probably causes local melting of the DNA helix, facilitating insertion of UvrB beta-hairpin between the DNA strands. Then UvrB probes one DNA strand for the presence of a lesion. If a lesion is found the UvrA subunits dissociate and the UvrB-DNA preincision complex is formed. This complex is subsequently bound by UvrC and the second UvrB is released. If no lesion is found, the DNA wraps around the other UvrB subunit that will check the other stand for damage. The protein is UvrABC system protein B of Haemophilus influenzae (strain 86-028NP).